We begin with the raw amino-acid sequence, 161 residues long: Peptidyl-prolyl cis-trans isomerase-like 1 (161 aa).

The 155-residue stretch at Met-1–Val-155 folds into the PPIase cyclophilin-type domain.

Belongs to the cyclophilin-type PPIase family. PPIL1 subfamily.

It catalyses the reaction [protein]-peptidylproline (omega=180) = [protein]-peptidylproline (omega=0). PPIases accelerate the folding of proteins. It catalyzes the cis-trans isomerization of proline imidic peptide bonds in oligopeptides. In Aspergillus oryzae (strain ATCC 42149 / RIB 40) (Yellow koji mold), this protein is Peptidyl-prolyl cis-trans isomerase-like 1 (cyp1).